The sequence spans 523 residues: Glycerate kinase (523 aa).

Ser60 carries the post-translational modification Phosphoserine. N6-acetyllysine is present on Lys200.

It belongs to the glycerate kinase type-2 family. As to expression, expressed in the hippocampus, callus, brain, cerebellum, renal cortex interstitial cells, epithelium of interlobular bile duct and skeletal muscle.

Its subcellular location is the cytoplasm. It catalyses the reaction (R)-glycerate + ATP = (2R)-3-phosphoglycerate + ADP + H(+). The polypeptide is Glycerate kinase (Glyctk) (Mus musculus (Mouse)).